A 557-amino-acid chain; its full sequence is Hepatocyte nuclear factor 1-beta (557 aa).

Residues 1–31 are dimerization; the sequence is MVSKLTSLQQELLSALLSSGVTKEVLVQALE. The HNF-p1 domain maps to 1–32; the sequence is MVSKLTSLQQELLSALLSSGVTKEVLVQALEE. Phosphoserine is present on residues S49, S52, S75, and S80. Positions 64–85 are disordered; it reads TLTNGHAKGRLSGDEGSEDGDD. In terms of domain architecture, POU-specific atypical spans 93–188; the sequence is KELQALNTEE…ILRQFNQTVQ (96 aa). Positions 231–311 form a DNA-binding region, homeobox; HNF1-type; that stretch reads MRRNRFKWGP…NRRKEEAFRQ (81 aa). Positions 324 to 370 are disordered; that stretch reads HSLNPLLSHGSPHHQPSSSPPNKLSGVRYSQQGNNEVTSSSTISHHG. Low complexity predominate over residues 328–344; that stretch reads PLLSHGSPHHQPSSSPP. The span at 351–370 shows a compositional bias: polar residues; sequence RYSQQGNNEVTSSSTISHHG.

This sequence belongs to the HNF1 homeobox family. As to quaternary structure, binds DNA as a dimer. Can form homodimer or heterodimer with HNF1-alpha. Interacts (via HNF-p1 domain) with PCBD1; the interaction increases its transactivation activity.

It localises to the nucleus. In terms of biological role, transcription factor that binds to the inverted palindrome 5'-GTTAATNATTAAC-3'. Binds to the FPC element in the cAMP regulatory unit of the PLAU gene. Transcriptional activity is increased by coactivator PCBD1. This is Hepatocyte nuclear factor 1-beta (HNF1B) from Pongo abelii (Sumatran orangutan).